Consider the following 67-residue polypeptide: Large ribosomal subunit protein bL35 (67 aa).

Belongs to the bacterial ribosomal protein bL35 family.

The sequence is that of Large ribosomal subunit protein bL35 from Gloeothece citriformis (strain PCC 7424) (Cyanothece sp. (strain PCC 7424)).